The following is a 265-amino-acid chain: Phosphatidylserine decarboxylase proenzyme (265 aa).

Residue S183 is the Schiff-base intermediate with substrate; via pyruvic acid of the active site. S183 is modified (pyruvic acid (Ser); by autocatalysis). The tract at residues 216-246 is disordered; that stretch reads TAPQTESEPESEPALQTAPVETAANPSAEQR.

The protein belongs to the phosphatidylserine decarboxylase family. PSD-A subfamily. In terms of assembly, heterodimer of a large membrane-associated beta subunit and a small pyruvoyl-containing alpha subunit. It depends on pyruvate as a cofactor. In terms of processing, is synthesized initially as an inactive proenzyme. Formation of the active enzyme involves a self-maturation process in which the active site pyruvoyl group is generated from an internal serine residue via an autocatalytic post-translational modification. Two non-identical subunits are generated from the proenzyme in this reaction, and the pyruvate is formed at the N-terminus of the alpha chain, which is derived from the carboxyl end of the proenzyme. The post-translation cleavage follows an unusual pathway, termed non-hydrolytic serinolysis, in which the side chain hydroxyl group of the serine supplies its oxygen atom to form the C-terminus of the beta chain, while the remainder of the serine residue undergoes an oxidative deamination to produce ammonia and the pyruvoyl prosthetic group on the alpha chain.

It is found in the cell membrane. The catalysed reaction is a 1,2-diacyl-sn-glycero-3-phospho-L-serine + H(+) = a 1,2-diacyl-sn-glycero-3-phosphoethanolamine + CO2. It participates in phospholipid metabolism; phosphatidylethanolamine biosynthesis; phosphatidylethanolamine from CDP-diacylglycerol: step 2/2. Catalyzes the formation of phosphatidylethanolamine (PtdEtn) from phosphatidylserine (PtdSer). The protein is Phosphatidylserine decarboxylase proenzyme of Neisseria meningitidis serogroup B (strain ATCC BAA-335 / MC58).